We begin with the raw amino-acid sequence, 489 residues long: MLDFMDYIQLAFSDASGWNRDNSYSTLTDTAKALLDFSTPERLRVHLSSLSTPQFATTYTLGTVGLIDGSVSYLFSTIPLDKTPSRSALISLRSLVPGYRQIYPPAVPLDLGLEWTLGSSGNTGAAEQALSNAYEDTGRSERKRKATLLHATLHLPPPTTLTALFLHRPSPTTKVSVALWSSQATNISKSASPQASILTQLFHDTGKYSTEFLFSTDNTLFGFRGLWNFGPDPRDSGGRNIATGNVKREKTSCPQSVALLSAGGEAYYSPTSSVIGLSTGVRFTTLPAAYDARSSSTSPPTLGGAGGSQIPSPISTFPYTLTLTLTPLTGSLSTTYSLLASPNLALSSRFGFNVYSWESEMVAGCELWRNRKKINLHNYNPDGSVDDLAWAKRKLGLLPPLESSDPASSSSSVSPTVSPVTSESVIKLRVDQSLRVRLLWEGRIKDLLVSAGVALGPTSAHTPSISCSGGSSSKGYSWTGVGVSVLYSS.

Belongs to the MDM10 family. As to quaternary structure, component of the ER-mitochondria encounter structure (ERMES) or MDM complex, composed of MMM1, MDM10, MDM12 and MDM34. Associates with the mitochondrial outer membrane sorting assembly machinery SAM(core) complex.

It localises to the mitochondrion outer membrane. Component of the ERMES/MDM complex, which serves as a molecular tether to connect the endoplasmic reticulum and mitochondria. Components of this complex are involved in the control of mitochondrial shape and protein biogenesis and may function in phospholipid exchange. MDM10 is involved in the late assembly steps of the general translocase of the mitochondrial outer membrane (TOM complex). Functions in the TOM40-specific route of the assembly of outer membrane beta-barrel proteins, including the association of TOM40 with the receptor TOM22 and small TOM proteins. Can associate with the SAM(core) complex as well as the MDM12-MMM1 complex, both involved in late steps of the major beta-barrel assembly pathway, that is responsible for biogenesis of all outer membrane beta-barrel proteins. May act as a switch that shuttles between both complexes and channels precursor proteins into the TOM40-specific pathway. Plays a role in mitochondrial morphology and in the inheritance of mitochondria. In Arthroderma otae (strain ATCC MYA-4605 / CBS 113480) (Microsporum canis), this protein is Mitochondrial distribution and morphology protein 10.